Here is a 102-residue protein sequence, read N- to C-terminus: Large ribosomal subunit protein bL21 (102 aa).

The protein belongs to the bacterial ribosomal protein bL21 family. In terms of assembly, part of the 50S ribosomal subunit. Contacts protein L20.

Functionally, this protein binds to 23S rRNA in the presence of protein L20. This chain is Large ribosomal subunit protein bL21, found in Leifsonia xyli subsp. xyli (strain CTCB07).